Here is an 872-residue protein sequence, read N- to C-terminus: Alanine--tRNA ligase (872 aa).

H567, H571, C669, and H673 together coordinate Zn(2+).

It belongs to the class-II aminoacyl-tRNA synthetase family. Requires Zn(2+) as cofactor.

Its subcellular location is the cytoplasm. The enzyme catalyses tRNA(Ala) + L-alanine + ATP = L-alanyl-tRNA(Ala) + AMP + diphosphate. Its function is as follows. Catalyzes the attachment of alanine to tRNA(Ala) in a two-step reaction: alanine is first activated by ATP to form Ala-AMP and then transferred to the acceptor end of tRNA(Ala). Also edits incorrectly charged Ser-tRNA(Ala) and Gly-tRNA(Ala) via its editing domain. The polypeptide is Alanine--tRNA ligase (Streptococcus thermophilus (strain CNRZ 1066)).